The sequence spans 953 residues: Translation initiation factor IF-2 (953 aa).

Disordered regions lie at residues 52 to 241 (KASK…QQEA) and 279 to 363 (TKLK…TERK). Basic and acidic residues-rich tracts occupy residues 80-89 (TGSEHVEKTQ), 98-111 (FKAEREARAKEQAA), and 140-188 (QGDK…ENHK). A compositionally biased stretch (polar residues) spans 191-207 (RFTNQKKQGRQEPQSKS). Residues 229–241 (RQSETRFRAQQEA) are compositionally biased toward basic and acidic residues. Positions 282–291 (KSSNISAKST) are enriched in polar residues. The segment covering 300 to 317 (ARPEKNRELTHHSQEGQK) has biased composition (basic and acidic residues). Low complexity predominate over residues 322-338 (SWNSQNQVRNQKNSNWN). The span at 339–348 (KNKKTKKGKN) shows a compositional bias: basic residues. One can recognise a tr-type G domain in the interval 454–623 (ERAPVVTIMG…LLVAEVEELK (170 aa)). Positions 463-470 (GHVDHGKT) are G1. 463–470 (GHVDHGKT) lines the GTP pocket. Positions 488–492 (GITQH) are G2. The G3 stretch occupies residues 509 to 512 (DTPG). GTP is bound by residues 509 to 513 (DTPGH) and 563 to 566 (NKID). Residues 563 to 566 (NKID) are G4. Positions 599 to 601 (SAK) are G5.

It belongs to the TRAFAC class translation factor GTPase superfamily. Classic translation factor GTPase family. IF-2 subfamily.

The protein resides in the cytoplasm. In terms of biological role, one of the essential components for the initiation of protein synthesis. Protects formylmethionyl-tRNA from spontaneous hydrolysis and promotes its binding to the 30S ribosomal subunits. Also involved in the hydrolysis of GTP during the formation of the 70S ribosomal complex. In Streptococcus pyogenes serotype M4 (strain MGAS10750), this protein is Translation initiation factor IF-2.